We begin with the raw amino-acid sequence, 144 residues long: Large ribosomal subunit protein uL15 (144 aa).

The interval 1–58 (MRLNELAPEPGSRPSAKRVGRGIGSGLGKTGGRGHKGLKSRSGGSVAPGFEGGQQPLA) is disordered. Residues 21–31 (RGIGSGLGKTG) are compositionally biased toward gly residues.

The protein belongs to the universal ribosomal protein uL15 family. As to quaternary structure, part of the 50S ribosomal subunit.

Its function is as follows. Binds to the 23S rRNA. The protein is Large ribosomal subunit protein uL15 of Marinobacter nauticus (strain ATCC 700491 / DSM 11845 / VT8) (Marinobacter aquaeolei).